The following is a 102-amino-acid chain: Monothiol glutaredoxin-S5 (102 aa).

A Glutaredoxin domain is found at methionine 1 to tryptophan 101. Cysteine 21 is a [2Fe-2S] cluster binding site. Residues alanine 99–leucine 102 carry the Responsive for interaction with TGA factors motif.

It belongs to the glutaredoxin family. CC-type subfamily.

It localises to the cytoplasm. Its subcellular location is the nucleus. Functionally, may only reduce GSH-thiol disulfides, but not protein disulfides. The sequence is that of Monothiol glutaredoxin-S5 (GRXS5) from Arabidopsis thaliana (Mouse-ear cress).